The chain runs to 511 residues: Maturase K (511 aa).

The protein belongs to the intron maturase 2 family. MatK subfamily.

The protein localises to the plastid. It is found in the chloroplast. Functionally, usually encoded in the trnK tRNA gene intron. Probably assists in splicing its own and other chloroplast group II introns. The polypeptide is Maturase K (Primula veris (Cowslip)).